We begin with the raw amino-acid sequence, 422 residues long: Testin (422 aa).

The PET domain maps to 92 to 199 (MILTNPVPAK…GDVKLPGELE (108 aa)). The interval 198–224 (LETKATDKNNVNSGDRSTSAAVGAMED) is disordered. Polar residues predominate over residues 205 to 217 (KNNVNSGDRSTSA). LIM zinc-binding domains are found at residues 234 to 297 (YSCY…CDSE), 299 to 359 (PRCA…KHAA), and 362 to 422 (QGCH…KMMS).

This sequence belongs to the prickle / espinas / testin family.

The protein localises to the cytoplasm. Its subcellular location is the cell junction. It localises to the focal adhesion. In terms of biological role, scaffold protein that may play a role in cell adhesion, cell spreading and in the reorganization of the actin cytoskeleton. May play a role in the regulation of cell proliferation. May inhibit cell growth. This is Testin (TES) from Gallus gallus (Chicken).